Consider the following 518-residue polypeptide: MHRIRTIDSDFGKKRQKKMDNHISSMIYEIKFHEFVLFILEKKMGATRRTFLTDLARKKGFRVENELSNSVTHIVAENNSGSDVLAWLKTHKMEKTTQFELLDISWLIECMKVGKPVDTKGKYQLMESRVDSANPDPTAGTLNILPPTTKTISQYACQRRTTINNHNQRFTDAFEILAKNYEFKENDDTCLTFMRAISVLKCLPFEVVSLKDTEGLPWIGDEVKGIMEEIIEDGESLEVQAVLNDERYQSFKLFTSVFGVGLKTADKWYRMGFRTLNKIRSDKTLKLTKMQKAGLCYYEDLIDCVSKAEADAVSLLVQDAVWTFLPDALVTITGGFRRGKEFGHDVDFLITSPGAEKEQEDQLLQKVTNLWKKQGLLLYCDLIESTFEDLKLPSRKIDALDHFQKCFLILKLYHHKEDKRKWEMPTGSNESEAKSWKAIRVDLVVCPYDRYAFALLGWSGSRQFERDLRRYATHEKKMMLDNHALYDKTKKIFLKAKSEEEIFAHLGLEYIQPSERNA.

The short motif at 11-17 (FGKKRQK) is the Nuclear localization signal element. The region spanning 27-124 (IYEIKFHEFV…KPVDTKGKYQ (98 aa)) is the BRCT domain. Residues 153 to 518 (SQYACQRRTT…EYIQPSERNA (366 aa)) form a mediates interaction with DNTTIP2 region. The involved in DNA binding stretch occupies residues 260-264 (VGLKT). A 2'-deoxyribonucleoside 5'-triphosphate contacts are provided by residues 335 to 340 (GFRRGK) and 344 to 347 (HDVD). Mg(2+) is bound by residues aspartate 345, aspartate 347, and aspartate 442. 457–458 (GW) is an a 2'-deoxyribonucleoside 5'-triphosphate binding site.

It belongs to the DNA polymerase type-X family. In terms of assembly, interacts with PRP19 and DNTTIP1. Interacts with TRERF1. Forms a ternary complex with DNTTIP2 and core histone. Released from this complex by PCNA. Requires Mg(2+) as cofactor.

The protein localises to the nucleus. It catalyses the reaction DNA(n) + a 2'-deoxyribonucleoside 5'-triphosphate = DNA(n+1) + diphosphate. Template-independent DNA polymerase which catalyzes the random addition of deoxynucleoside 5'-triphosphate to the 3'-end of a DNA initiator. One of the in vivo functions of this enzyme is the addition of nucleotides at the junction (N region) of rearranged Ig heavy chain and T-cell receptor gene segments during the maturation of B- and T-cells. This Monodelphis domestica (Gray short-tailed opossum) protein is DNA nucleotidylexotransferase (DNTT).